Consider the following 1790-residue polypeptide: Vitellogenin (1790 aa).

The first 19 residues, 1–19 (MWSTVALCLLVGLSYVSSS), serve as a signal peptide directing secretion. One can recognise a Vitellogenin domain in the interval 23–799 (WKDNTEYVYS…SAESSFPKIM (777 aa)). N-linked (GlcNAc...) asparagine glycosylation is found at asparagine 219 and asparagine 297. Acidic residues predominate over residues 342 to 353 (LMEDSSSEESSE). The disordered stretch occupies residues 342–400 (LMEDSSSEESSEQEMTHRRFRRSANSLTKQWRESSEEWNQQQQQPRPQLTRAPHSPLLP). A compositionally biased stretch (low complexity) spans 378–389 (EWNQQQQQPRPQ). N-linked (GlcNAc...) asparagine glycans are attached at residues asparagine 554, asparagine 573, asparagine 893, asparagine 1345, asparagine 1416, asparagine 1430, asparagine 1480, asparagine 1699, and asparagine 1735. One can recognise a VWFD domain in the interval 1466–1675 (PTCVIDQTTA…SYQVEKGQQW (210 aa)). Cysteine 1468 and cysteine 1638 form a disulfide bridge.

Its subcellular location is the secreted. Functionally, precursor of the egg-yolk proteins that are sources of nutrients during embryonic development. In Anthonomus grandis (Mexican cotton boll weevil), this protein is Vitellogenin (VTG).